A 185-amino-acid polypeptide reads, in one-letter code: Small ribosomal subunit protein uS5c (185 aa).

In terms of domain architecture, S5 DRBM spans 26 to 89 (FVERLIKISR…ADGRKNLIKI (64 aa)).

The protein belongs to the universal ribosomal protein uS5 family. As to quaternary structure, part of the 30S ribosomal subunit. Contacts protein S4.

The protein localises to the plastid. It is found in the chloroplast. With S4 and S12 plays an important role in translational accuracy. This is Small ribosomal subunit protein uS5c (rps5) from Trieres chinensis (Marine centric diatom).